Reading from the N-terminus, the 481-residue chain is ATP synthase subunit beta (481 aa).

167-174 lines the ATP pocket; that stretch reads GGAGVGKT.

It belongs to the ATPase alpha/beta chains family. As to quaternary structure, F-type ATPases have 2 components, CF(1) - the catalytic core - and CF(0) - the membrane proton channel. CF(1) has five subunits: alpha(3), beta(3), gamma(1), delta(1), epsilon(1). CF(0) has three main subunits: a(1), b(2) and c(9-12). The alpha and beta chains form an alternating ring which encloses part of the gamma chain. CF(1) is attached to CF(0) by a central stalk formed by the gamma and epsilon chains, while a peripheral stalk is formed by the delta and b chains.

The protein resides in the cell membrane. It catalyses the reaction ATP + H2O + 4 H(+)(in) = ADP + phosphate + 5 H(+)(out). In terms of biological role, produces ATP from ADP in the presence of a proton gradient across the membrane. The catalytic sites are hosted primarily by the beta subunits. The polypeptide is ATP synthase subunit beta (Corynebacterium diphtheriae (strain ATCC 700971 / NCTC 13129 / Biotype gravis)).